A 262-amino-acid chain; its full sequence is Hydroxyethylthiazole kinase (262 aa).

Substrate is bound at residue Met50. ATP is bound by residues Arg125 and Thr171. A substrate-binding site is contributed by Gly198.

It belongs to the Thz kinase family. The cofactor is Mg(2+).

It catalyses the reaction 5-(2-hydroxyethyl)-4-methylthiazole + ATP = 4-methyl-5-(2-phosphooxyethyl)-thiazole + ADP + H(+). It functions in the pathway cofactor biosynthesis; thiamine diphosphate biosynthesis; 4-methyl-5-(2-phosphoethyl)-thiazole from 5-(2-hydroxyethyl)-4-methylthiazole: step 1/1. Functionally, catalyzes the phosphorylation of the hydroxyl group of 4-methyl-5-beta-hydroxyethylthiazole (THZ). The protein is Hydroxyethylthiazole kinase of Escherichia coli (strain 55989 / EAEC).